The following is a 126-amino-acid chain: Glycine cleavage system H protein (126 aa).

Residues 20–102 enclose the Lipoyl-binding domain; sequence IGTIGITDYA…LGDGWFFKVR (83 aa). Position 61 is an N6-lipoyllysine (K61).

Belongs to the GcvH family. As to quaternary structure, the glycine cleavage system is composed of four proteins: P, T, L and H. Requires (R)-lipoate as cofactor.

Functionally, the glycine cleavage system catalyzes the degradation of glycine. The H protein shuttles the methylamine group of glycine from the P protein to the T protein. This Rhodospirillum rubrum (strain ATCC 11170 / ATH 1.1.1 / DSM 467 / LMG 4362 / NCIMB 8255 / S1) protein is Glycine cleavage system H protein.